Here is a 140-residue protein sequence, read N- to C-terminus: 3-hydroxyacyl-[acyl-carrier-protein] dehydratase FabZ (140 aa).

H48 is an active-site residue.

Belongs to the thioester dehydratase family. FabZ subfamily.

The protein localises to the cytoplasm. The catalysed reaction is a (3R)-hydroxyacyl-[ACP] = a (2E)-enoyl-[ACP] + H2O. Its function is as follows. Involved in unsaturated fatty acids biosynthesis. Catalyzes the dehydration of short chain beta-hydroxyacyl-ACPs and long chain saturated and unsaturated beta-hydroxyacyl-ACPs. The sequence is that of 3-hydroxyacyl-[acyl-carrier-protein] dehydratase FabZ from Latilactobacillus sakei subsp. sakei (strain 23K) (Lactobacillus sakei subsp. sakei).